The following is a 79-amino-acid chain: uncharacterized protein (79 aa).

This is an uncharacterized protein from Caenorhabditis elegans.